We begin with the raw amino-acid sequence, 804 residues long: Probable replication endonuclease from prophage-like region 2 (804 aa).

Residues tyrosine 503 and tyrosine 507 each act as O-(5'-phospho-DNA)-tyrosine intermediate in the active site.

This sequence belongs to the phage GPA family.

Functionally, possible endonuclease which induces a single-strand cut and initiates DNA replication. The protein is Probable replication endonuclease from prophage-like region 2 of Salmonella typhi.